Here is a 376-residue protein sequence, read N- to C-terminus: Glutamate 5-kinase (376 aa).

Lys-10 serves as a coordination point for ATP. Ser-50, Asp-137, and Asn-149 together coordinate substrate. 169–170 (TD) lines the ATP pocket. The PUA domain maps to 275 to 353 (RGRLVLDAGA…AEIAGVLGFM (79 aa)).

It belongs to the glutamate 5-kinase family.

It localises to the cytoplasm. The catalysed reaction is L-glutamate + ATP = L-glutamyl 5-phosphate + ADP. It participates in amino-acid biosynthesis; L-proline biosynthesis; L-glutamate 5-semialdehyde from L-glutamate: step 1/2. Its function is as follows. Catalyzes the transfer of a phosphate group to glutamate to form L-glutamate 5-phosphate. The polypeptide is Glutamate 5-kinase (Alcanivorax borkumensis (strain ATCC 700651 / DSM 11573 / NCIMB 13689 / SK2)).